We begin with the raw amino-acid sequence, 802 residues long: Endoplasmin (802 aa).

Positions 1 to 21 (MRVLWVLGLCCVLLTFGFVRA) are cleaved as a signal peptide. The SRT pseudosubstrate motif signature appears at 42–44 (SRT). N62 is a glycosylation site (N-linked (GlcNAc...) asparagine). Phosphoserine is present on S64. N-linked (GlcNAc...) asparagine glycosylation is present at N107. ATP is bound by residues N107, D149, and N162. K168 carries the post-translational modification N6-(2-hydroxyisobutyryl)lysine. The residue at position 172 (S172) is a Phosphoserine. An ATP-binding site is contributed by F199. The N-linked (GlcNAc...) asparagine glycan is linked to N217. Residues 290 to 317 (EEPLEEDEAAKEEKEESDDEAAVEEEEE) are compositionally biased toward acidic residues. Positions 290–323 (EEPLEEDEAAKEEKEESDDEAAVEEEEEEKKPKT) are disordered. S306 and S403 each carry phosphoserine. An N6-succinyllysine modification is found at K404. An N-linked (GlcNAc...) asparagine glycan is attached at N445. Residue S447 is modified to Phosphoserine. An N6-acetyllysine modification is found at K479. Residues N481 and N502 are each glycosylated (N-linked (GlcNAc...) asparagine). The residue at position 633 (K633) is an N6-succinyllysine. Residues 749–802 (IDPEAQVEEEPEEEPEDTSEDAEDSEQDEGEEMDAGTEEEEEETEKESTEKDEL) form a disordered region. The segment covering 753 to 793 (AQVEEEPEEEPEDTSEDAEDSEQDEGEEMDAGTEEEEEETE) has biased composition (acidic residues). Position 785 is a phosphothreonine (T785). The Prevents secretion from ER motif lies at 799 to 802 (KDEL).

Belongs to the heat shock protein 90 family. As to quaternary structure, homodimer; disulfide-linked. Component of an EIF2 complex at least composed of CELF1/CUGBP1, CALR, CALR3, EIF2S1, EIF2S2, HSP90B1 and HSPA5. Part of a large chaperone multiprotein complex comprising DNAJB11, HSP90B1, HSPA5, HYOU, PDIA2, PDIA4, PDIA6, PPIB, SDF2L1, UGGT1 and very small amounts of ERP29, but not, or at very low levels, CALR nor CANX. Hyperglycosylated form interacts with OS9; promoting its degradation by the endoplasmic reticulum associated degradation (ERAD). Interacts with AIMP1; regulates its retention in the endoplasmic reticulum. Interacts with CNPY3; this interaction is disrupted in the presence of ATP. Interacts with TLR4, TLR9 and TLR11, but not with TLR3. Interacts with MZB1 in a calcium-dependent manner. Interacts with METTL23. Interacts with IL1B; the interaction facilitates cargo translocation into the ERGIC. Interacts with EIF2AK3. In terms of processing, phosphorylated by CK2. N-glycosylated cotranslationally at Asn-217 by STT3A-containing OST-A complex: this glycosylation is constitutive. In response to various stress, 5 additional facultative sites (Asn-62, Asn-107, Asn-445, Asn-481 and Asn-502) can be glycosylated post-translationally by STT3B-containing OST-B complex, leading to a hyperglycosylated form that is degraded by the ER-associated degradation (ERAD) pathway. In normal conditions, the OST-A complex together with CCDC134 prevent glycosylation at facultative sites during protein folding, thereby preventing hyperglycosylation. Mechanistically, nascent HSP90B1 is tethered during translation to a specialized CCDC134-containing translocon that forms a microenvironment for its folding, in which STT3A associates with the SRT pseudosubstrate motif, and prevents access to facultative glycosylation sites until folding is completed, rendering its facultative sites inaccessible to the OST-B complex.

The protein localises to the endoplasmic reticulum lumen. It localises to the sarcoplasmic reticulum lumen. It is found in the melanosome. It carries out the reaction ATP + H2O = ADP + phosphate + H(+). Functionally, ATP-dependent chaperone involved in the processing of proteins in the endoplasmic reticulum, regulating their transport. Together with MESD, acts as a modulator of the Wnt pathway by promoting the folding of LRP6, a coreceptor of the canonical Wnt pathway. When associated with CNPY3, required for proper folding of Toll-like receptors. Promotes folding and trafficking of TLR4 to the cell surface. May participate in the unfolding of cytosolic leaderless cargos (lacking the secretion signal sequence) such as the interleukin 1/IL-1 to facilitate their translocation into the ERGIC (endoplasmic reticulum-Golgi intermediate compartment) and secretion; the translocation process is mediated by the cargo receptor TMED10. This Mus musculus (Mouse) protein is Endoplasmin (Hsp90b1).